The primary structure comprises 899 residues: Ewing's tumor-associated antigen 1 homolog (899 aa).

Residues 1–82 form a disordered region; the sequence is MSRRRKHGDS…TEERYETPKR (82 aa). Positions 71–81 are enriched in basic and acidic residues; it reads SNTEERYETPK. Positions 105–111 match the ATR-activation domain (AAD) motif; the sequence is IFWDQNS. Residues 180 to 210 adopt a coiled-coil conformation; it reads TKLKSQNQEEELMKLAKQFDKNMEELDVIQE. Glycyl lysine isopeptide (Lys-Gly) (interchain with G-Cter in SUMO2) cross-links involve residues Lys-416 and Lys-444. A Phosphoserine modification is found at Ser-467. Glycyl lysine isopeptide (Lys-Gly) (interchain with G-Cter in SUMO2) cross-links involve residues Lys-485 and Lys-539. The RBM1 motif motif lies at 607–622; sequence DDVDDDILYQACDDIE. A Phosphoserine modification is found at Ser-810. The interval 833-899 is disordered; it reads NKTVNPLPGK…AQASSVKKGR (67 aa). Basic and acidic residues predominate over residues 859 to 877; that stretch reads PSKEEEEKNRKCSPEEIQR. The RBM2 motif signature appears at 868 to 890; sequence RKCSPEEIQRKRQAALIRRMAKA.

Interacts (via RBM1 motif) with RPA1. Interacts (via RBM2 motif) with RPA2. Interacts (via the ATR-activation domain motif) with ATR. Phosphorylated by ATR.

It localises to the nucleus. Replication stress response protein that accumulates at DNA damage sites and promotes replication fork progression and integrity. Recruited to stalled replication forks via interaction with the RPA complex and directly stimulates ATR kinase activity independently of TOPBP1. Probably only regulates a subset of ATR targets. This chain is Ewing's tumor-associated antigen 1 homolog, found in Bos taurus (Bovine).